We begin with the raw amino-acid sequence, 473 residues long: Ornithine decarboxylase (473 aa).

K106 is modified (N6-(pyridoxal phosphate)lysine). Pyridoxal 5'-phosphate is bound by residues S240, G277, and E313–R316. F367–D368 provides a ligand contact to substrate. C417 functions as the Proton donor; shared with dimeric partner in the catalytic mechanism. Residue D418 coordinates substrate. Position 447 (Y447) interacts with pyridoxal 5'-phosphate.

Belongs to the Orn/Lys/Arg decarboxylase class-II family. As to quaternary structure, homodimer. Only the dimer is catalytically active, as the active sites are constructed of residues from both monomers. Pyridoxal 5'-phosphate is required as a cofactor.

The protein localises to the cytoplasm. The enzyme catalyses L-ornithine + H(+) = putrescine + CO2. It participates in amine and polyamine biosynthesis; putrescine biosynthesis via L-ornithine pathway; putrescine from L-ornithine: step 1/1. With respect to regulation, inhibited by antizyme (AZ) OAZ1 in response to polyamine levels. AZ inhibits the assembly of the functional homodimer by binding to ODC monomers and targeting them for ubiquitin-independent proteolytic destruction by the 26S proteasome. In terms of biological role, catalyzes the first and rate-limiting step of polyamine biosynthesis that converts ornithine into putrescine, which is the precursor for the polyamines, spermidine and spermine. Polyamines are essential for cell proliferation and are implicated in cellular processes, ranging from DNA replication to apoptosis. In Candida albicans (strain SC5314 / ATCC MYA-2876) (Yeast), this protein is Ornithine decarboxylase (SPE1).